The sequence spans 341 residues: DNA-directed RNA polymerase subunit alpha (341 aa).

An alpha N-terminal domain (alpha-NTD) region spans residues 1–233; sequence MLKDGTSVSN…DLLSPFLHTK (233 aa). The segment at 262 to 341 is alpha C-terminal domain (alpha-CTD); it reads SEGDFFKNTF…NEKPRVVGDE (80 aa).

This sequence belongs to the RNA polymerase alpha chain family. As to quaternary structure, in plastids the minimal PEP RNA polymerase catalytic core is composed of four subunits: alpha, beta, beta', and beta''. When a (nuclear-encoded) sigma factor is associated with the core the holoenzyme is formed, which can initiate transcription.

The protein localises to the plastid. It is found in the chloroplast. It catalyses the reaction RNA(n) + a ribonucleoside 5'-triphosphate = RNA(n+1) + diphosphate. Its function is as follows. DNA-dependent RNA polymerase catalyzes the transcription of DNA into RNA using the four ribonucleoside triphosphates as substrates. The sequence is that of DNA-directed RNA polymerase subunit alpha from Marsilea quadrifolia (European water clover).